The following is a 48-amino-acid chain: ATP synthase protein 8 (48 aa).

N-formylmethionine is present on methionine 1. The Mitochondrial intermembrane portion of the chain corresponds to 1–12 (MPQLVPFYFTNQ). Residues 13-32 (IFYGFASLSVIVYLFSIYIL) form a helical membrane-spanning segment. Topologically, residues 33–48 (PHYLEIYVTRIFITKT) are mitochondrial matrix.

In terms of assembly, F-type ATP synthases have 2 components, the catalytic core F(1) and the membrane-embedded component F(0), linked together by a central stalk and a peripheral stalk. The central stalk, also called rotor shaft, is often seen as part of F(1). The peripheral stalk is seen as part of F(0). F(0) contains the membrane channel next to the rotor. F-type ATP synthases form dimers but each monomer functions independently in ATP generation. The dimer consists of 17 different polypeptides: ATP1 (subunit alpha, 3 molecules per monomer, part of F(1)), ATP2 (subunit beta, 3 copies per monomer, part of F(1)), ATP3 (subunit gamma, part of the central stalk), ATP4 (subunit b, part of the peripheral stalk), ATP5/OSCP (subunit 5/OSCP, part of the peripheral stalk), ATP6 (subunit a, part of the peripheral stalk), ATP7 (subunit d, part of the peripheral stalk), ATP8 (subunit 8, part of the peripheral stalk), OLI1 (subunit c, part of the rotor, 10 molecules per monomer), ATP14 (subunit h, part of the peripheral stalk), ATP15 (subunit epsilon, part of the central stalk), ATP16 (subunit delta, part of the central stalk), ATP17 (subunit f, part of the peripheral stalk), ATP18 (subunit i/j, part of the peripheral stalk), ATP19 (subunit k, dimer-specific, at interface between monomers), ATP20 (subunit g, at interface between monomers), TIM11 (subunit e, at interface between monomers).

The protein localises to the mitochondrion inner membrane. In terms of biological role, mitochondrial membrane ATP synthase (F(1)F(0) ATP synthase or Complex V) produces ATP from ADP in the presence of a proton gradient across the membrane which is generated by electron transport complexes of the respiratory chain. F-type ATP synthases consist of two structural domains, F(1) - containing the extramembraneous catalytic core, and F(0) - containing the membrane proton channel, linked together by a central stalk and a peripheral stalk. During catalysis, ATP synthesis in the catalytic domain of F(1) is coupled via a rotary mechanism of the central stalk subunits to proton translocation. Part of the complex F(0) domain. Minor subunit located with subunit a/ATP6 in the membrane. The polypeptide is ATP synthase protein 8 (Yarrowia lipolytica (strain CLIB 122 / E 150) (Yeast)).